Consider the following 211-residue polypeptide: MRVIGLTGGIATGKSTFAALLRARGAPVVDADALARAAVEPGTPALAEIARTFGAEVLRPDGALDRKALGARVFADPGARRRLEAITHPAVRLAMREETARLAAQGHPLAFYDTPLLYEVGLEALLDAVVVVWAPRDVQRERLMRRDGLGGAEADARLAAQLPVDEKAARADFVVENAGAPEALAGKADRLLADLRGGRGRRLPNAPPVRY.

In terms of domain architecture, DPCK spans 3–206; that stretch reads VIGLTGGIAT…GGRGRRLPNA (204 aa). ATP is bound at residue 11–16; it reads ATGKST.

The protein belongs to the CoaE family.

The protein resides in the cytoplasm. The catalysed reaction is 3'-dephospho-CoA + ATP = ADP + CoA + H(+). It participates in cofactor biosynthesis; coenzyme A biosynthesis; CoA from (R)-pantothenate: step 5/5. In terms of biological role, catalyzes the phosphorylation of the 3'-hydroxyl group of dephosphocoenzyme A to form coenzyme A. In Anaeromyxobacter dehalogenans (strain 2CP-C), this protein is Dephospho-CoA kinase.